The primary structure comprises 344 residues: GTP 3',8-cyclase (344 aa).

The Radical SAM core domain occupies 19 to 245 (PFGRAVTYLR…DIPYRTGGPA (227 aa)). Residue R28 coordinates GTP. [4Fe-4S] cluster contacts are provided by C35 and C39. Y41 provides a ligand contact to S-adenosyl-L-methionine. A [4Fe-4S] cluster-binding site is contributed by C42. R77 lines the GTP pocket. G81 serves as a coordination point for S-adenosyl-L-methionine. T111 contacts GTP. S135 lines the S-adenosyl-L-methionine pocket. Position 171 (K171) interacts with GTP. M205 is an S-adenosyl-L-methionine binding site. 2 residues coordinate [4Fe-4S] cluster: C268 and C271. 273–275 (RVR) provides a ligand contact to GTP. C285 is a binding site for [4Fe-4S] cluster.

It belongs to the radical SAM superfamily. MoaA family. As to quaternary structure, monomer and homodimer. The cofactor is [4Fe-4S] cluster.

The enzyme catalyses GTP + AH2 + S-adenosyl-L-methionine = (8S)-3',8-cyclo-7,8-dihydroguanosine 5'-triphosphate + 5'-deoxyadenosine + L-methionine + A + H(+). It functions in the pathway cofactor biosynthesis; molybdopterin biosynthesis. Its function is as follows. Catalyzes the cyclization of GTP to (8S)-3',8-cyclo-7,8-dihydroguanosine 5'-triphosphate. The protein is GTP 3',8-cyclase of Brucella ovis (strain ATCC 25840 / 63/290 / NCTC 10512).